A 422-amino-acid chain; its full sequence is Interleukin-11 receptor subunit alpha (422 aa).

Residues 1–22 (MSSSCSGLSRVLVAVATALVSA) form the signal peptide. Topologically, residues 24 to 370 (SPCPQAWGPP…DSVEQVAVLV (347 aa)) are extracellular. An Ig-like C2-type domain is found at 27-110 (PQAWGPPGVQ…LGGTVTLQLG (84 aa)). 3 disulfide bridges follow: C48/C94, C120/C130, and C170/C180. Fibronectin type-III domains follow at residues 112 to 219 (PPAR…LRPD) and 220 to 317 (PPQG…TPST). N-linked (GlcNAc...) asparagine glycosylation occurs at N127. The N-linked (GlcNAc...) asparagine glycan is linked to N194. Residues 304–308 (WSTWS) carry the WSXWS motif motif. The disordered stretch occupies residues 335–355 (EVEPQVDSPAPPRPSLQPHPR). Residues 371–391 (SLGILSFLGLVAGALALGLWL) traverse the membrane as a helical segment. The Cytoplasmic segment spans residues 392–422 (RLRRGGKDGSPKPGFLASVIPVDRHPGAPNL).

It belongs to the type I cytokine receptor family. Type 3 subfamily. On IL11 binding, forms a multimer complex with IL6ST/gp130. A short soluble form is also released from the membrane by proteolysis. The sIL11RA is formed either by limited proteolysis of membrane-bound receptors, a process referred to as ectodomain shedding, or directly secreted from the cells after alternative mRNA splicing. mIL11RA is cleaved by the proteases ADAM10, ELANE and PRTN3.

Its subcellular location is the membrane. It localises to the secreted. In terms of biological role, receptor for interleukin-11 (IL11). The receptor systems for IL6, LIF, OSM, CNTF, IL11 and CT1 can utilize IL6ST for initiating signal transmission. The IL11/IL11RA/IL6ST complex may be involved in the control of proliferation and/or differentiation of skeletogenic progenitor or other mesenchymal cells. Essential for the normal development of craniofacial bones and teeth. Restricts suture fusion and tooth number. Its function is as follows. Soluble form of IL11 receptor (sIL11RA) that acts as an agonist of IL11 activity. The IL11:sIL11RA complex binds to IL6ST/gp130 on cell surfaces and induces signaling also on cells that do not express membrane-bound IL11RA in a process called IL11 trans-signaling. The protein is Interleukin-11 receptor subunit alpha (IL11RA) of Pongo abelii (Sumatran orangutan).